We begin with the raw amino-acid sequence, 532 residues long: Probable C4-dicarboxylate sensor kinase (532 aa).

Over 1–12 (MRLFRQLSIQWK) the chain is Cytoplasmic. Residues 13-33 (ITILSFGIVAFALMMVSISLL) form a helical membrane-spanning segment. Residues 34–175 (GYVTSIKEDE…YADMIQEFWQ (142 aa)) are Extracellular-facing. The chain crosses the membrane as a helical span at residues 176 to 196 (PALLIGLITALFGFWGSWLLA). The Cytoplasmic portion of the chain corresponds to 197-532 (SHIKRQTFNM…FSIYLPKKRG (336 aa)). A PAS domain is found at 216-279 (VERDASFNAI…PEILSIGKPL (64 aa)). In terms of domain architecture, Histidine kinase spans 315–531 (SDVDRLAEEL…TFSIYLPKKR (217 aa)). Histidine 339 is modified (phosphohistidine; by autocatalysis).

It localises to the cell membrane. The enzyme catalyses ATP + protein L-histidine = ADP + protein N-phospho-L-histidine.. Its function is as follows. Member of the two-component regulatory system DctS/DctR. Probably activates DctR by phosphorylation. Essential for expression of dctP. This is Probable C4-dicarboxylate sensor kinase (dctS) from Halalkalibacterium halodurans (strain ATCC BAA-125 / DSM 18197 / FERM 7344 / JCM 9153 / C-125) (Bacillus halodurans).